The following is a 145-amino-acid chain: Ribosome-binding factor A (145 aa).

The segment covering 122-132 (KVQRDLESAPR) has biased composition (basic and acidic residues). The disordered stretch occupies residues 122–145 (KVQRDLESAPREDDEGEPASSSRD).

This sequence belongs to the RbfA family. In terms of assembly, monomer. Binds 30S ribosomal subunits, but not 50S ribosomal subunits or 70S ribosomes.

Its subcellular location is the cytoplasm. One of several proteins that assist in the late maturation steps of the functional core of the 30S ribosomal subunit. Associates with free 30S ribosomal subunits (but not with 30S subunits that are part of 70S ribosomes or polysomes). Required for efficient processing of 16S rRNA. May interact with the 5'-terminal helix region of 16S rRNA. The protein is Ribosome-binding factor A of Methylorubrum extorquens (strain CM4 / NCIMB 13688) (Methylobacterium extorquens).